The primary structure comprises 112 residues: UPF0251 protein MA_4245 (112 aa).

It belongs to the UPF0251 family.

The chain is UPF0251 protein MA_4245 from Methanosarcina acetivorans (strain ATCC 35395 / DSM 2834 / JCM 12185 / C2A).